The following is a 287-amino-acid chain: MNKSIAPATSVVAGNVKFGNALPLSVIAGPCQLESRAHALEVASALKEIATRLGIGLVYKTSFDKANRTSAASARGLGLDAALPIFAEIRDHLGLPVLTDVHENEQCARAAEAVDILQIPAFLCRQTDLLLAAAATGRIVNVKKGQFLAPWDMGNVVSKITHAGNAKVLVTERGVSFGYNTLVSDMRALPIMAKTTGAPVIFDATHSVQQPGGKGTSSGGEREYVPVLARAAVAVGVAGVFIETHPDPDHAPSDGPNMVPLREFEALIKTLMEFDALAKKRSTVGAV.

This sequence belongs to the KdsA family.

The protein localises to the cytoplasm. The enzyme catalyses D-arabinose 5-phosphate + phosphoenolpyruvate + H2O = 3-deoxy-alpha-D-manno-2-octulosonate-8-phosphate + phosphate. It functions in the pathway carbohydrate biosynthesis; 3-deoxy-D-manno-octulosonate biosynthesis; 3-deoxy-D-manno-octulosonate from D-ribulose 5-phosphate: step 2/3. Its pathway is bacterial outer membrane biogenesis; lipopolysaccharide biosynthesis. The sequence is that of 2-dehydro-3-deoxyphosphooctonate aldolase from Rhodopseudomonas palustris (strain TIE-1).